The following is a 413-amino-acid chain: uncharacterized protein (413 aa).

An N-terminal signal peptide occupies residues 1–20 (MRVIIVIMMVVFVVVGTSSG).

This is an uncharacterized protein from Archaeoglobus fulgidus (strain ATCC 49558 / DSM 4304 / JCM 9628 / NBRC 100126 / VC-16).